Here is a 474-residue protein sequence, read N- to C-terminus: tRNA-2-methylthio-N(6)-dimethylallyladenosine synthase (474 aa).

Residues 3–120 (KKLHIKTWGC…LPDMIDQVRR (118 aa)) enclose the MTTase N-terminal domain. Cys12, Cys49, Cys83, Cys157, Cys161, and Cys164 together coordinate [4Fe-4S] cluster. The Radical SAM core domain maps to 143–375 (RAEGPTAFVS…QDRITQQAMR (233 aa)). In terms of domain architecture, TRAM spans 378–441 (RHMMGTVQRI…TNSLRGKFIR (64 aa)).

This sequence belongs to the methylthiotransferase family. MiaB subfamily. In terms of assembly, monomer. Requires [4Fe-4S] cluster as cofactor.

Its subcellular location is the cytoplasm. The enzyme catalyses N(6)-dimethylallyladenosine(37) in tRNA + (sulfur carrier)-SH + AH2 + 2 S-adenosyl-L-methionine = 2-methylsulfanyl-N(6)-dimethylallyladenosine(37) in tRNA + (sulfur carrier)-H + 5'-deoxyadenosine + L-methionine + A + S-adenosyl-L-homocysteine + 2 H(+). Catalyzes the methylthiolation of N6-(dimethylallyl)adenosine (i(6)A), leading to the formation of 2-methylthio-N6-(dimethylallyl)adenosine (ms(2)i(6)A) at position 37 in tRNAs that read codons beginning with uridine. The chain is tRNA-2-methylthio-N(6)-dimethylallyladenosine synthase from Shewanella sp. (strain ANA-3).